The chain runs to 494 residues: Probable cytosol aminopeptidase (494 aa).

Mn(2+)-binding residues include lysine 260 and aspartate 265. Lysine 272 is a catalytic residue. Mn(2+) contacts are provided by aspartate 283, aspartate 342, and glutamate 344. Arginine 346 is an active-site residue.

It belongs to the peptidase M17 family. Mn(2+) serves as cofactor.

The protein localises to the cytoplasm. The enzyme catalyses Release of an N-terminal amino acid, Xaa-|-Yaa-, in which Xaa is preferably Leu, but may be other amino acids including Pro although not Arg or Lys, and Yaa may be Pro. Amino acid amides and methyl esters are also readily hydrolyzed, but rates on arylamides are exceedingly low.. The catalysed reaction is Release of an N-terminal amino acid, preferentially leucine, but not glutamic or aspartic acids.. In terms of biological role, presumably involved in the processing and regular turnover of intracellular proteins. Catalyzes the removal of unsubstituted N-terminal amino acids from various peptides. This is Probable cytosol aminopeptidase from Bacillus thuringiensis subsp. konkukian (strain 97-27).